We begin with the raw amino-acid sequence, 277 residues long: 3-methyl-2-oxobutanoate hydroxymethyltransferase (277 aa).

Mg(2+) is bound by residues aspartate 43 and aspartate 82. Residues 43 to 44 (DS), aspartate 82, and lysine 112 contribute to the 3-methyl-2-oxobutanoate site. Glutamate 114 provides a ligand contact to Mg(2+). Glutamate 181 acts as the Proton acceptor in catalysis.

The protein belongs to the PanB family. As to quaternary structure, homodecamer; pentamer of dimers. Mg(2+) is required as a cofactor.

The protein localises to the cytoplasm. It catalyses the reaction 3-methyl-2-oxobutanoate + (6R)-5,10-methylene-5,6,7,8-tetrahydrofolate + H2O = 2-dehydropantoate + (6S)-5,6,7,8-tetrahydrofolate. It functions in the pathway cofactor biosynthesis; (R)-pantothenate biosynthesis; (R)-pantoate from 3-methyl-2-oxobutanoate: step 1/2. Functionally, catalyzes the reversible reaction in which hydroxymethyl group from 5,10-methylenetetrahydrofolate is transferred onto alpha-ketoisovalerate to form ketopantoate. This Bacillus subtilis (strain 168) protein is 3-methyl-2-oxobutanoate hydroxymethyltransferase.